The chain runs to 366 residues: 3-dehydroquinate synthase (366 aa).

NAD(+)-binding positions include D71–K76, G105–D109, T129–T130, K142, K151, and T169–T172. Zn(2+)-binding residues include E184, H247, and H264.

This sequence belongs to the sugar phosphate cyclases superfamily. Dehydroquinate synthase family. Requires Co(2+) as cofactor. Zn(2+) is required as a cofactor. The cofactor is NAD(+).

It localises to the cytoplasm. It catalyses the reaction 7-phospho-2-dehydro-3-deoxy-D-arabino-heptonate = 3-dehydroquinate + phosphate. It functions in the pathway metabolic intermediate biosynthesis; chorismate biosynthesis; chorismate from D-erythrose 4-phosphate and phosphoenolpyruvate: step 2/7. Its function is as follows. Catalyzes the conversion of 3-deoxy-D-arabino-heptulosonate 7-phosphate (DAHP) to dehydroquinate (DHQ). This Actinobacillus pleuropneumoniae serotype 5b (strain L20) protein is 3-dehydroquinate synthase.